A 647-amino-acid polypeptide reads, in one-letter code: Methyl-accepting chemotaxis protein McpK (647 aa).

Over M1–R16 the chain is Cytoplasmic. Residues K17–N37 traverse the membrane as a helical segment. The Periplasmic portion of the chain corresponds to R38 to R291. The HBM domain maps to A45–A287. Residues A292–I312 form a helical membrane-spanning segment. Residues N313–L647 are Cytoplasmic-facing. Residues R314–G370 enclose the HAMP domain. The region spanning G375 to R611 is the Methyl-accepting transducer domain.

The protein belongs to the methyl-accepting chemotaxis (MCP) protein family. As to quaternary structure, ligand free ligand-binding domain (LBD) is present in a monomer-dimer equilibrium. AlphaKG binding stabilizes the homodimer.

Its subcellular location is the cell inner membrane. In terms of biological role, chemotactic-signal transducers respond to changes in the concentration of attractants and repellents in the environment, transduce a signal from the outside to the inside of the cell, and facilitate sensory adaptation through the variation of the level of methylation. McpK is a chemoreceptor that specifically binds and mediates chemotaxis to alpha-ketoglutarate (alphaKG). The sequence is that of Methyl-accepting chemotaxis protein McpK from Pseudomonas aeruginosa (strain ATCC 15692 / DSM 22644 / CIP 104116 / JCM 14847 / LMG 12228 / 1C / PRS 101 / PAO1).